Reading from the N-terminus, the 276-residue chain is NH(3)-dependent NAD(+) synthetase (276 aa).

43-50 contacts ATP; that stretch reads GISGGVDS. Asp-49 contributes to the Mg(2+) binding site. Arg-146 lines the deamido-NAD(+) pocket. Thr-166 provides a ligand contact to ATP. Glu-171 provides a ligand contact to Mg(2+). 2 residues coordinate deamido-NAD(+): Lys-179 and Asp-186. ATP is bound by residues Lys-195 and Thr-217. 266 to 267 provides a ligand contact to deamido-NAD(+); that stretch reads HK.

It belongs to the NAD synthetase family. In terms of assembly, homodimer.

The enzyme catalyses deamido-NAD(+) + NH4(+) + ATP = AMP + diphosphate + NAD(+) + H(+). Its pathway is cofactor biosynthesis; NAD(+) biosynthesis; NAD(+) from deamido-NAD(+) (ammonia route): step 1/1. Its function is as follows. Catalyzes the ATP-dependent amidation of deamido-NAD to form NAD. Uses ammonia as a nitrogen source. The sequence is that of NH(3)-dependent NAD(+) synthetase from Vibrio vulnificus (strain YJ016).